Here is a 370-residue protein sequence, read N- to C-terminus: 3-dehydroquinate synthase (370 aa).

Residues Gly107–Asp111, Thr131–Ser132, Lys144, and Lys153 each bind NAD(+). Glu186, His249, and His267 together coordinate Zn(2+).

Belongs to the sugar phosphate cyclases superfamily. Dehydroquinate synthase family. Requires Co(2+) as cofactor. It depends on Zn(2+) as a cofactor. The cofactor is NAD(+).

Its subcellular location is the cytoplasm. It carries out the reaction 7-phospho-2-dehydro-3-deoxy-D-arabino-heptonate = 3-dehydroquinate + phosphate. Its pathway is metabolic intermediate biosynthesis; chorismate biosynthesis; chorismate from D-erythrose 4-phosphate and phosphoenolpyruvate: step 2/7. In terms of biological role, catalyzes the conversion of 3-deoxy-D-arabino-heptulosonate 7-phosphate (DAHP) to dehydroquinate (DHQ). This is 3-dehydroquinate synthase from Ruegeria pomeroyi (strain ATCC 700808 / DSM 15171 / DSS-3) (Silicibacter pomeroyi).